The following is a 202-amino-acid chain: Outer-membrane lipoprotein LolB (202 aa).

A signal peptide spans 1 to 24 (MESKEQHLIRQYFILAMFFLFLAG). Cys-25 carries the N-palmitoyl cysteine lipid modification. Residue Cys-25 is the site of S-diacylglycerol cysteine attachment.

The protein belongs to the LolB family. Monomer.

Its subcellular location is the cell outer membrane. In terms of biological role, plays a critical role in the incorporation of lipoproteins in the outer membrane after they are released by the LolA protein. The polypeptide is Outer-membrane lipoprotein LolB (Pseudoalteromonas translucida (strain TAC 125)).